The following is a 143-amino-acid chain: Small ribosomal subunit protein uS12 (143 aa).

Pro62 bears the Hydroxyproline mark.

This sequence belongs to the universal ribosomal protein uS12 family. Component of the 40S small ribosomal subunit.

The protein resides in the cytoplasm. Its subcellular location is the cytosol. It is found in the rough endoplasmic reticulum. The polypeptide is Small ribosomal subunit protein uS12 (RPS23) (Ciona intestinalis (Transparent sea squirt)).